A 501-amino-acid polypeptide reads, in one-letter code: E3 ubiquitin-protein ligase TRIM35 (501 aa).

Met-1 carries the post-translational modification N-acetylmethionine. Ser-8 is modified (phosphoserine). Residues 21–61 (CAVCYDPFRDAVTLRCGHNFCRRCVSGCWEVQTTPSCPVCK) form an RING-type zinc finger. A B box-type zinc finger spans residues 96–137 (RSPRPCRAHRAPLTLFCLEDKELLCCACQADARHQEHRVQPI). Zn(2+)-binding residues include Cys-101, His-104, Cys-123, and His-129. A coiled-coil region spans residues 200–252 (VEEQATLDAMKEESRKKHLQAEEKMKQLAEQTEALAREIERLQMEMKEDDMTF). The B30.2/SPRY domain maps to 284–495 (LESLQYRVWK…LRICHLRVSI (212 aa)).

It belongs to the TRIM/RBCC family. Interacts with PKM isoform M2, but not isoform M1; this interaction may compete with that between PKM and FGFR1, and hence reduces FGFR1-dependent tyrosine phosphorylation of PKM. Interacts with IRF7; this interaction promotes IRF7 proteasomal degradation. Interacts with TRAF3; this interaction promotes TRAF3 activation. As to expression, widely expressed. Highly expressed in brain, heart, kidney, spleen, skeletal muscle, lung and thymus. Lower expression found in stomach, large intestine and bone marrow.

It localises to the cytoplasm. Its subcellular location is the nucleus. The enzyme catalyses S-ubiquitinyl-[E2 ubiquitin-conjugating enzyme]-L-cysteine + [acceptor protein]-L-lysine = [E2 ubiquitin-conjugating enzyme]-L-cysteine + N(6)-ubiquitinyl-[acceptor protein]-L-lysine.. It functions in the pathway protein modification; protein ubiquitination. E3 ubiquitin-protein ligase that participates in multiple biological processes including cell death, glucose metabolism, and in particular, the innate immune response. Mediates 'Lys-63'-linked polyubiquitination of TRAF3 thereby promoting type I interferon production via RIG-I signaling pathway. Can also catalyze 'Lys-48'-linked polyubiquitination and proteasomal degradation of viral proteins such as influenza virus PB2. Acts as a negative feedback regulator of TLR7- and TLR9-triggered signaling. Mechanistically, promotes the 'Lys-48'-linked ubiquitination of IRF7 and induces its degradation via a proteasome-dependent pathway. Reduces FGFR1-dependent tyrosine phosphorylation of PKM, inhibiting PKM-dependent lactate production, glucose metabolism, and cell growth. The protein is E3 ubiquitin-protein ligase TRIM35 (Trim35) of Mus musculus (Mouse).